A 245-amino-acid polypeptide reads, in one-letter code: Small ribosomal subunit protein uS2 (245 aa).

The protein belongs to the universal ribosomal protein uS2 family.

This is Small ribosomal subunit protein uS2 from Dehalococcoides mccartyi (strain ATCC BAA-2266 / KCTC 15142 / 195) (Dehalococcoides ethenogenes (strain 195)).